The chain runs to 201 residues: Small ribosomal subunit protein uS4 (201 aa).

In terms of domain architecture, S4 RNA-binding spans 91-157 (CRLDNVVYRA…TPFIIAKETI (67 aa)).

Belongs to the universal ribosomal protein uS4 family. As to quaternary structure, part of the 30S ribosomal subunit. Contacts protein S5. The interaction surface between S4 and S5 is involved in control of translational fidelity.

One of the primary rRNA binding proteins, it binds directly to 16S rRNA where it nucleates assembly of the body of the 30S subunit. Functionally, with S5 and S12 plays an important role in translational accuracy. The polypeptide is Small ribosomal subunit protein uS4 (Saccharopolyspora erythraea (strain ATCC 11635 / DSM 40517 / JCM 4748 / NBRC 13426 / NCIMB 8594 / NRRL 2338)).